The following is a 389-amino-acid chain: MTETTPAKPKGPFDGLLVIDLTHVLNGPFGTTILTDLGARTIKIEPPGHGDDTRTYGPYVGDQSLYFSFVNRGKESIVLNLKDEGDRAIFLEMVRKADVLAENFRPGVMDRLGFNYEELAKINPRLIYASSSGFGQTGPLAHYPAYDTIVQAMSGIMMATGFPDGPPTRVGGTSLSDLCGGVFMFCGIASALYARERTGKGAHIDVSMFDGTLAFLQHALMCWSATGKAPARIGNRHPYMAPFDVFQAQDKPFVICCGNDHLFKALCDVIGAPELATDPRFVENHDRMANNDALKAALEKALSKQPAAHWLDVIHKAGVPVGPLLDVAEAANLPQTAARNMLIKSGGVMMPGNPVKISGYDDPHERPGAPKLDEQGAALRKEFAAPEAK.

Residue His237 is part of the active site.

In terms of assembly, homodimer.

It carries out the reaction oxalate + acetyl-CoA = oxalyl-CoA + acetate. In terms of biological role, involved in the catabolism of oxalate and in the adapatation to low pH. ACOCT serves to prime the oxalate-induced acid tolerance response (ATR) cycle by producing substrate for oxalyl-CoA decarboxylase (OXC) and formyl-coenzyme A transferase (FCOCT). Catalyzes the reversible conversion of acetyl-CoA and oxalate to oxalyl-CoA and acetate. It can also use formyl-CoA and oxalate to produce oxalyl-CoA and formate with significantly reduced specific activity. This Acetobacter aceti protein is Acetyl-CoA:oxalate CoA-transferase (uctC).